The following is a 1193-amino-acid chain: K(+) efflux antiporter 1, chloroplastic (1193 aa).

Residues methionine 1–arginine 49 constitute a chloroplast transit peptide. Over arginine 50–glutamate 585 the chain is Stromal. Residues serine 103 to glutamate 135 form a disordered region. Residues aspartate 131–glutamine 355 adopt a coiled-coil conformation. Lysine 168 bears the N6-acetyllysine; by NSI mark. Residues leucine 351–leucine 364 show a composition bias toward polar residues. Disordered stretches follow at residues leucine 351–glutamate 372 and glutamine 421–lysine 474. The span at lysine 439–lysine 465 shows a compositional bias: basic and acidic residues. The helical transmembrane segment at glutamate 586–phenylalanine 606 threads the bilayer. Residues glutamine 607 to glycine 612 lie on the Chloroplast intermembrane side of the membrane. The helical transmembrane segment at serine 613–isoleucine 633 threads the bilayer. Topologically, residues arginine 634–arginine 640 are stromal. A helical membrane pass occupies residues alanine 641–glutamate 661. The Chloroplast intermembrane portion of the chain corresponds to arginine 662 to lysine 668. A helical transmembrane segment spans residues tyrosine 669–alanine 689. Residues histidine 690–proline 698 are Stromal-facing. A helical membrane pass occupies residues alanine 699–leucine 719. The Chloroplast intermembrane portion of the chain corresponds to glutamine 720 to serine 733. The helical transmembrane segment at phenylalanine 734 to isoleucine 754 threads the bilayer. Residues serine 755–glutamine 766 lie on the Stromal side of the membrane. Residues alanine 767–isoleucine 787 traverse the membrane as a helical segment. The Chloroplast intermembrane segment spans residues alanine 788 to arginine 827. Residues alanine 828–phenylalanine 848 traverse the membrane as a helical segment. Residues serine 849–arginine 860 lie on the Stromal side of the membrane. A helical membrane pass occupies residues glycine 861 to leucine 881. The Chloroplast intermembrane portion of the chain corresponds to serine 882–asparagine 883. A helical membrane pass occupies residues phenylalanine 884 to isoleucine 904. Residues methionine 905–serine 912 are Stromal-facing. A helical membrane pass occupies residues isoleucine 913–alanine 933. The Chloroplast intermembrane segment spans residues phenylalanine 934 to serine 948. The helical transmembrane segment at serine 949 to glycine 969 threads the bilayer. Over glutamine 970–isoleucine 1193 the chain is Stromal. An RCK N-terminal domain is found at glutamine 995 to proline 1112. A disordered region spans residues glycine 1165–glutamine 1184.

Belongs to the monovalent cation:proton antiporter 2 (CPA2) transporter (TC 2.A.37) family. KEA (TC 2.A.37.1) subfamily. In terms of processing, acetylated at Lys-168 by the stromal acetyltransferase enzyme NSI. As to expression, expressed in shoots and roots. Mainly localized to leaf veins, hypocotyls, mesophylls and guard cells. Accumulates at high levels in small and dividing plastids (at protein level).

It localises to the plastid. It is found in the chloroplast inner membrane. The enzyme catalyses K(+)(in) + H(+)(out) = K(+)(out) + H(+)(in). Repressed by sodium ions Na(+). Functionally, electroneutral K(+)/H(+) efflux antiporter involved in chloroplastic K(+) homeostasis and osmotic adjustment, especially during plastid division and thylakoid membrane formation. Collaboratively with KEA2, adjusts alkaline stromal pH upon light to dark transitions in plastids. Together with KEA2, critical for chloroplast development, including chloroplast RNA-metabolism (e.g. rRNA maturation, polysome loading and RNA-protein interactions) and plastid gene expression (PGE), ion homeostasis, and photosynthesis. Contributes, during early seedling development, to the regulation of photosynthesis and abscisic acid- (ABA-) mediated primary root growth in a sucrose-dependent manner. Involved in the regulation of reactive oxygen and nitrogen species (ROS and RNS) metabolism. Required in roots for rapid hyperosmotic-induced Ca(2+) responses and for osmo-sensory potentiation in hyperosmotic conditions. May counteract resilience to drought and salt stress, involving photorespiratory pathway and stomata closure. In Arabidopsis thaliana (Mouse-ear cress), this protein is K(+) efflux antiporter 1, chloroplastic.